The primary structure comprises 85 residues: Large ribosomal subunit protein bL27 (85 aa).

Positions 1 to 20 (MAHKKAGGSTRNGRDSESKR) are disordered.

Belongs to the bacterial ribosomal protein bL27 family.

The protein is Large ribosomal subunit protein bL27 of Yersinia enterocolitica serotype O:8 / biotype 1B (strain NCTC 13174 / 8081).